The sequence spans 269 residues: Regulatory protein RecX (269 aa).

It belongs to the RecX family.

It is found in the cytoplasm. Its function is as follows. Modulates RecA activity. This is Regulatory protein RecX from Listeria monocytogenes serotype 4a (strain HCC23).